We begin with the raw amino-acid sequence, 149 residues long: NPC intracellular cholesterol transporter 2 (149 aa).

A signal peptide spans M1 to A19. 3 cysteine pairs are disulfide-bonded: C27–C140, C42–C47, and C93–C99. A glycan (N-linked (GlcNAc...) asparagine) is linked at N58. An N6-acetyllysine modification is found at K116.

Belongs to the NPC2 family. As to quaternary structure, interacts with NPC1 (via the second lumenal domain) in a cholestrol-dependent manner. Interacts with NUS1/NgBR, the interaction stabilizes NCP2 and regulates cholesterol trafficking. Interacts with DHDDS. Interacts with NEDD4L (via C2 domain). Interacts with NPC1L1. Expressed in kidney, spleen, liver and mammary gland, but not in testis.

Its subcellular location is the secreted. The protein localises to the endoplasmic reticulum. It is found in the lysosome. The enzyme catalyses cholesterol(in) = cholesterol(out). Its function is as follows. Intracellular cholesterol transporter which acts in concert with NPC1 and plays an important role in the egress of cholesterol from the lysosomal compartment. Unesterified cholesterol that has been released from LDLs in the lumen of the late endosomes/lysosomes is transferred by NPC2 to the cholesterol-binding pocket in the N-terminal domain of NPC1. May bind and mobilize cholesterol that is associated with membranes. NPC2 binds cholesterol with a 1:1 stoichiometry. Can bind a variety of sterols, including lathosterol, desmosterol and the plant sterols stigmasterol and beta-sitosterol. The secreted form of NCP2 regulates biliary cholesterol secretion via stimulation of ABCG5/ABCG8-mediated cholesterol transport. The polypeptide is NPC intracellular cholesterol transporter 2 (Bos taurus (Bovine)).